The following is a 225-amino-acid chain: Small ribosomal subunit protein uS5 (225 aa).

The 64-residue stretch at 57 to 120 (LEEQVLDVKL…AQAKLSLIKV (64 aa)) folds into the S5 DRBM domain.

It belongs to the universal ribosomal protein uS5 family. In terms of assembly, part of the 30S ribosomal subunit. Contacts protein S4.

Its function is as follows. With S4 and S12 plays an important role in translational accuracy. The chain is Small ribosomal subunit protein uS5 from Methanococcus vannielii (strain ATCC 35089 / DSM 1224 / JCM 13029 / OCM 148 / SB).